The following is a 503-amino-acid chain: Nondiscriminating glutamyl-tRNA synthetase EARS2, mitochondrial (503 aa).

The N-terminal 22 residues, 1-22 (MKILRGVSRQMCTSRPEVRVRF), are a transit peptide targeting the mitochondrion. 21–23 (RFA) is a binding site for L-glutamate. Positions 26-34 (PTGFLHLGG) match the 'HIGH' region motif. H31 serves as a coordination point for ATP. L-glutamate is bound by residues E57, 209-213 (YHLAS), and R227. Residues E230 and 265-269 (KLSKR) contribute to the ATP site. The short motif at 265 to 269 (KLSKR) is the 'KMSKS' region element.

The protein belongs to the class-I aminoacyl-tRNA synthetase family. Glutamate--tRNA ligase type 1 subfamily.

It localises to the mitochondrion matrix. The enzyme catalyses tRNA(Glx) + L-glutamate + ATP = L-glutamyl-tRNA(Glx) + AMP + diphosphate. It catalyses the reaction tRNA(Glu) + L-glutamate + ATP = L-glutamyl-tRNA(Glu) + AMP + diphosphate. It carries out the reaction tRNA(Gln) + L-glutamate + ATP = L-glutamyl-tRNA(Gln) + AMP + diphosphate. In terms of biological role, non-discriminating glutamyl-tRNA synthetase that catalyzes aminoacylation of both mitochondrial tRNA(Glu) and tRNA(Gln) and participates in RNA aminoacylation for mitochondrial protein translation. Attachs glutamate to tRNA(Glu) or tRNA(Gln) in a two-step reaction: glutamate is first activated by ATP to form Glu-AMP and then transferred to the acceptor end of tRNA(Glu) or tRNA(Gln). This is Nondiscriminating glutamyl-tRNA synthetase EARS2, mitochondrial from Danio rerio (Zebrafish).